A 174-amino-acid polypeptide reads, in one-letter code: Adipose-secreted signaling protein (174 aa).

This sequence belongs to the ADISSP family.

The protein resides in the secreted. May be involved in thermogenesis and glucose homeostasis. In Xenopus tropicalis (Western clawed frog), this protein is Adipose-secreted signaling protein.